Reading from the N-terminus, the 322-residue chain is Nodulation protein D 1 (322 aa).

In terms of domain architecture, HTH lysR-type spans 6–63 (LDLNLLVALDALMTERKLTAAARSINLSQPAMSAAITRLRTYFRDELFTMNGRELVPT). The segment at residues 23-42 (LTAAARSINLSQPAMSAAIT) is a DNA-binding region (H-T-H motif).

The protein belongs to the LysR transcriptional regulatory family.

Its function is as follows. Regulates the expression of the nod abcFE genes which encode other nodulation proteins. NodD is also a negative regulator of its own expression. Binds flavonoids as inducers. The protein is Nodulation protein D 1 (nodD1) of Sinorhizobium fredii (strain NBRC 101917 / NGR234).